A 409-amino-acid polypeptide reads, in one-letter code: uncharacterized protein (409 aa).

The next 10 membrane-spanning stretches (helical) occupy residues 18-38 (ALSAWRFVTVFGVVGLLADVV), 47-67 (GPLLASLGATGLVVGVVTGVG), 100-120 (VVTVPLLGIAGALWVACALVI), 159-179 (VGAMIGPLTVAGMLAITGNAY), 180-200 (APALGVLTLPGGAALALLLWL), 232-252 (FWLYCGFTAITMLGFGTFGLL), 260-280 (GVLAAAMVPVVYAAAMAADAL), 302-322 (ILSILVVLFAFTDNVTMVVIG), 355-375 (GVFAAGLGAATAGGGALIGWL), and 380-400 (IGTLVVVVIALELMALVMMFA).

The protein localises to the cell membrane. This is an uncharacterized protein from Mycobacterium tuberculosis (strain CDC 1551 / Oshkosh).